The following is a 158-amino-acid chain: ATP synthase subunit beta, mitochondrial (158 aa).

It belongs to the ATPase alpha/beta chains family. As to quaternary structure, F-type ATPases have 2 components, CF(1) - the catalytic core - and CF(0) - the membrane proton channel. CF(1) has five subunits: alpha(3), beta(3), gamma(1), delta(1), epsilon(1). CF(0) has three main subunits: a, b and c.

The protein localises to the mitochondrion. The protein resides in the mitochondrion inner membrane. The enzyme catalyses ATP + H2O + 4 H(+)(in) = ADP + phosphate + 5 H(+)(out). Functionally, mitochondrial membrane ATP synthase (F(1)F(0) ATP synthase or Complex V) produces ATP from ADP in the presence of a proton gradient across the membrane which is generated by electron transport complexes of the respiratory chain. F-type ATPases consist of two structural domains, F(1) - containing the extramembraneous catalytic core, and F(0) - containing the membrane proton channel, linked together by a central stalk and a peripheral stalk. During catalysis, ATP synthesis in the catalytic domain of F(1) is coupled via a rotary mechanism of the central stalk subunits to proton translocation. Subunits alpha and beta form the catalytic core in F(1). Rotation of the central stalk against the surrounding alpha(3)beta(3) subunits leads to hydrolysis of ATP in three separate catalytic sites on the beta subunits. The polypeptide is ATP synthase subunit beta, mitochondrial (Schizaphis graminum (Green bug aphid)).